The chain runs to 206 residues: Ribosomal RNA small subunit methyltransferase G (206 aa).

Residues Gly73, Leu78, 124–125 (VE), and Arg139 contribute to the S-adenosyl-L-methionine site.

The protein belongs to the methyltransferase superfamily. RNA methyltransferase RsmG family.

It is found in the cytoplasm. It carries out the reaction guanosine(527) in 16S rRNA + S-adenosyl-L-methionine = N(7)-methylguanosine(527) in 16S rRNA + S-adenosyl-L-homocysteine. In terms of biological role, specifically methylates the N7 position of guanine in position 527 of 16S rRNA. This chain is Ribosomal RNA small subunit methyltransferase G, found in Idiomarina loihiensis (strain ATCC BAA-735 / DSM 15497 / L2-TR).